The primary structure comprises 361 residues: MAAPGPASRFWCSCPEVPSATFFTALLSLLVSGPRLFLLQPPLAPSGLSLRSEALRNWQVYRLVTYIFVYENPVSLLCGAIIIWRFAGNFERTVGTVRHCFFTLIFTVFSAIIYLSFESVSSLSKLGEVEDARGFTPVAFAMLGVTSVRSRMRRALVFGVVVPSVLVPWLLLCASWLIPQTSFLSNVSGLLIGLSYGLTYCYSLDLSERVALKLDQKFPFSLMRRIPLFKYISGSSAERRAAQSRRLNPAPGSYPTQSCHPHLTPSYPVTQMQHASGQKLASWPPGHMPSLPPYQPASGLCYVQNHFGPNPNASSVYPASAGTSQGVQPPSPISCPGTVYSGALGTPGATGSKESSKVAMP.

5 helical membrane passes run 19–39 (SATF…LFLL), 63–83 (LVTY…AIII), 100–120 (CFFT…FESV), 158–178 (FGVV…SWLI), and 182–202 (SFLS…TYCY). Disordered regions lie at residues 265–287 (PSYP…PPGH) and 318–361 (PASA…VAMP). 2 stretches are compositionally biased toward polar residues: residues 267 to 276 (YPVTQMQHAS) and 318 to 328 (PASAGTSQGVQ).

The protein belongs to the peptidase S54 family. In terms of assembly, might form homotrimers; these trimers are only formed in retina. In terms of tissue distribution, widely expressed, including in retina and brain (at protein level), as well as in kidney, testis and ovary. Expressed in all layers of the retina, including inner segments of photoreceptor cells and ganglion cells (at protein level).

It localises to the golgi apparatus. It is found in the cis-Golgi network membrane. The protein is Rhomboid domain-containing protein 2 (Rhbdd2) of Mus musculus (Mouse).